The following is a 785-amino-acid chain: MKLGKVEFCHLLQIIALFLCLSGMNQAEPSRSRSKPYFQSGRTRTKRSWVWNQFFVLEEYMGSDPLYVGKLHSDVDKGDGSIKYILSGEGASSIFIIDENTGDIHATKRLDREEQAYYTLRAQAHDRLTNKPVEPESEFVIKIQDINDNEPKFLDGPYTAGVPEMSPVGTSVVQVTATDADDPTYGNSARVVYSILQGQPYFSVEPKTGIIKTALPNMDREAKDQYLLVIQAKDMVGQNGGLSGTTSVTVTLTDVNDNPPRFPRRSYQYNVPESLPLASVVARIKAADADVGPNAEMEYKIVDGDGLGVFKISVDKDTQEGIITIQKELDFEAKTSYTLRIEAANMHVDPRFLSLGPFSDMTTVKIIVEDVDEPPVFTSRLYSMVVSEAAKVGTIIGTVAAHDPDASNSPVRYSIDRNTDLERYFNIDANSGVITTAKSLDRETNAVHNITVLAMESQNPAQIGRGYVAITILDINDNAPEFAMEYETTVCENAQPGQIIQKISAIDKDDPPNGHQFYFSLTAEAANNHNFTLQDNKDNTATVLTRRNGFRRQEQSVFYLPIFIVDSGSPSLSSTNTLTIRVCDCDADGIAQTCNAEAYILPAGLSTGALIAILACVLTLLVLVLLIVTMRRRKKEPLIFDEERDIRENIVRYDDEGGGEEDTEAFDMAALRNLNIIRDTKTRRDVTPEIQFLSRPTFKSIPDNVIFREFIWERLKEADVDPCAPPYDSLQTYAFEGNGSVAESLSSLDSISSNSDQNYDYLSDWGPRFKRLADMYGSGPDCLYS.

The N-terminal stretch at 1 to 27 (MKLGKVEFCHLLQIIALFLCLSGMNQA) is a signal peptide. Positions 28-47 (EPSRSRSKPYFQSGRTRTKR) are excised as a propeptide. At 48-607 (SWVWNQFFVL…AYILPAGLST (560 aa)) the chain is on the extracellular side. Cadherin domains are found at residues 49–153 (WVWN…EPKF), 154–262 (LDGP…PPRF), 263–377 (PRRS…PPVF), 378–482 (TSRL…APEF), and 482–599 (FAME…AEAY). Asn449 and Asn530 each carry an N-linked (GlcNAc...) asparagine glycan. The chain crosses the membrane as a helical span at residues 608 to 628 (GALIAILACVLTLLVLVLLIV). At 629–785 (TMRRRKKEPL…YGSGPDCLYS (157 aa)) the chain is on the cytoplasmic side.

It localises to the cell membrane. Cadherins are calcium-dependent cell adhesion proteins. They preferentially interact with themselves in a homophilic manner in connecting cells; cadherins may thus contribute to the sorting of heterogeneous cell types. The sequence is that of Cadherin-7 (CDH7) from Gallus gallus (Chicken).